The following is a 132-amino-acid chain: Small ribosomal subunit protein uS8 (132 aa).

Belongs to the universal ribosomal protein uS8 family. Part of the 30S ribosomal subunit. Contacts proteins S5 and S12.

In terms of biological role, one of the primary rRNA binding proteins, it binds directly to 16S rRNA central domain where it helps coordinate assembly of the platform of the 30S subunit. The chain is Small ribosomal subunit protein uS8 from Clavibacter michiganensis subsp. michiganensis (strain NCPPB 382).